An 89-amino-acid polypeptide reads, in one-letter code: Small ribosomal subunit protein uS15 (89 aa).

Belongs to the universal ribosomal protein uS15 family. Part of the 30S ribosomal subunit. Forms a bridge to the 50S subunit in the 70S ribosome, contacting the 23S rRNA.

One of the primary rRNA binding proteins, it binds directly to 16S rRNA where it helps nucleate assembly of the platform of the 30S subunit by binding and bridging several RNA helices of the 16S rRNA. Functionally, forms an intersubunit bridge (bridge B4) with the 23S rRNA of the 50S subunit in the ribosome. This is Small ribosomal subunit protein uS15 from Alcanivorax borkumensis (strain ATCC 700651 / DSM 11573 / NCIMB 13689 / SK2).